Consider the following 530-residue polypeptide: MKFVEIRDLQVTYMGKDKPSIVVDKLDIEEGESVLITGRSGSGKSTLVSVINGVIPHLINAEIKGEVRVFGFDVKSTPIHEISKYVGTLLQDPDTQAFNYTIIDEVAFGVENYMISRDEMIERVEESMKIYGISHLRDREINTLSGGELQRTILASVLAMRPKALILDEPTSNIDPQGTREILELVKTFRSEGISLVLVEHKIERVLPFVDRIIVVEEGKIAVDVRKDEIVDKADFLYSLGLEIPDYMLFLKKNGFRKIDYEYLRKTYTYRPPSRIGGKGEALYASVKVKTKNGIYLINTKISLKQGTITALMGKNGSGKTTLLKVIVGLIDKKRLIVEEEKVIVNGVDLSKTKLVERGKFIAYLPQFFDVMFIKRTVEDEIKFSMKNRGTYDEKRLGEVLKMFSLDAYRKEDPLVLSMGQRRRVAMASVLAGGAKVILMDEPTSGQDWYHRQILGKELLELRDKGYTILVVTHDSRFVDRFADYLLVMNEGKIVLEGKPEEVFIKSLRHGIEPPLEYELGGLIKNEHFS.

2 consecutive ABC transporter domains span residues 6 to 243 (IRDL…LGLE) and 282 to 516 (ALYA…EPPL). ATP is bound by residues 38–45 (GRSGSGKS) and 314–321 (GKNGSGKT).

This sequence belongs to the ABC transporter superfamily.

It is found in the cell membrane. Probably part of an ABC transporter complex. Responsible for energy coupling to the transport system. The chain is Putative ABC transporter ATP-binding protein SSO2030 from Saccharolobus solfataricus (strain ATCC 35092 / DSM 1617 / JCM 11322 / P2) (Sulfolobus solfataricus).